Reading from the N-terminus, the 312-residue chain is Ribosomal protein L11 methyltransferase (312 aa).

4 residues coordinate S-adenosyl-L-methionine: threonine 160, glycine 181, aspartate 203, and asparagine 246.

This sequence belongs to the methyltransferase superfamily. PrmA family.

The protein localises to the cytoplasm. It catalyses the reaction L-lysyl-[protein] + 3 S-adenosyl-L-methionine = N(6),N(6),N(6)-trimethyl-L-lysyl-[protein] + 3 S-adenosyl-L-homocysteine + 3 H(+). Its function is as follows. Methylates ribosomal protein L11. In Staphylococcus carnosus (strain TM300), this protein is Ribosomal protein L11 methyltransferase.